A 102-amino-acid chain; its full sequence is Small ribosomal subunit protein uS10 (102 aa).

This sequence belongs to the universal ribosomal protein uS10 family. As to quaternary structure, part of the 30S ribosomal subunit.

Functionally, involved in the binding of tRNA to the ribosomes. This Oceanobacillus iheyensis (strain DSM 14371 / CIP 107618 / JCM 11309 / KCTC 3954 / HTE831) protein is Small ribosomal subunit protein uS10.